The chain runs to 266 residues: CD82 antigen (266 aa).

Residues 1–11 (MGAGCVKVTKY) are Cytoplasmic-facing. Cys-5 carries S-palmitoyl cysteine lipidation. The helical transmembrane segment at 12-32 (FLFLFNLLFFILGAVILGFGV) threads the bilayer. At 33-53 (WILADKNSFISVLQTSSSSLQ) the chain is on the extracellular side. The helical transmembrane segment at 54 to 72 (VGAYVFIGVGAITIVMGFL) threads the bilayer. Topologically, residues 73 to 83 (GCIGAVNEVRC) are cytoplasmic. Cys-74 carries S-palmitoyl cysteine lipidation. The helical transmembrane segment at 84–110 (LLGLYFVFLLLILIAQVTVGVLFYFNA) threads the bilayer. The Extracellular portion of the chain corresponds to 111 to 227 (DKLKKEMGNT…KAQAWLQENF (117 aa)). Residues Asn-127, Asn-131, Asn-157, and Asn-197 are each glycosylated (N-linked (GlcNAc...) asparagine). The chain crosses the membrane as a helical span at residues 228–249 (GILLGVCAGVAVIELLGLFLSI). Topologically, residues 250–266 (CLCRYIHSEDYSKVPKY) are cytoplasmic.

Belongs to the tetraspanin (TM4SF) family. Forms homooligomers. Interacts directly with IGSF8. Interacts with EGFR. Interacts with VEGFA and PDGFA. Interacts with ITGA4. Interacts with ITGA6; this interaction reduces ITGA6 cell surface expression. Interacts with ITGB1. Interacts with TLR4; this interaction inhibits TLR4-mediated signaling pathway. Interacts with TLR9. Interacts with PLAUR. Palmitoylated. Palmitoylation contributes to oligomerization and surface expression. In terms of tissue distribution, highest expression in the spleen and the kidney. Low expression in skeletal muscle and in the heart.

Its subcellular location is the cell membrane. The protein resides in the cytoplasmic vesicle. It is found in the phagosome. Its function is as follows. Structural component of specialized membrane microdomains known as tetraspanin-enriched microdomains (TERMs), which act as platforms for receptor clustering and signaling. Participates thereby in diverse biological functions such as cell signal transduction, adhesion, migration and protein trafficking. Acts as a attenuator of EGF signaling, facilitating ligand-induced endocytosis of the receptor and its subsequent desensitization. Mechanistically, modulates ligand-induced ubiquitination and trafficking of EGFR via E3 ligase CBL phosphorylation by PKC. Increases cell-matrix adhesion by regulating the membrane organization of integrin alpha4/ITA4. Modulates adhesion and suppresses cell migration through other integrins such as the alpha6/ITGA6 and beta1/ITGB1. Decreases cell-associated plasminogen activation by interfering with the interaction between urokinase-type plasminogen activator/PLAU and its receptor PLAUR. Associates with CD4 or CD8 and delivers costimulatory signals for the TCR/CD3 pathway. Plays a role in the restrains phagocyte migration but supports macrophage activation. Plays a role in TLR9 trafficking to acidified CpG-containing compartments by controlling interaction between TLR9 and VAMP3 and subsequent myddosome assembly. Inhibits LPS-induced inflammatory response by preventing binding of LPS to TLR4 on the cell surface. Plays a role in the activation of macrophages into anti-inflammatory phenotypes. Independently of Toll-like receptor (TLR) signaling, is recruited to pathogen-containing phagosomes prior to fusion with lysosomes and participates in antigen presentation. Also acts to control angiogenesis and switch angiogenic milieu to quiescent state by binding and sequestering VEGFA and PDGFA to inhibit the signaling they trigger via their respective cell surface receptor. In Mus musculus (Mouse), this protein is CD82 antigen (Cd82).